A 313-amino-acid chain; its full sequence is MNVLEQQLNHLVDECRPYTAQGKVADYIPELAHVKNDLLGVAICLPDGTYIHAGDVHHKFTIQSVSKALTLCYVLMEFGEDYVFSKVGMEPTGDAFNSIAKLEETVPSKPLNPMINAGALAVTSMILGETAELKIYQFRQFLATLLNRSVEEVTYDEKVARSEYETTDLNRALLYFMRHHGIVEGDVDEIIDVYTKQCAIEIDCFDLARIGRVFAGNGEDPDTGEELIPRRVVRIVKAIMTTCGMYDASGEFAVRVGLPGKSGVSGAILAVGNHELDLNNVGFGIFGPALDSKGNSIAGMKLLELLIERYTSR.

The substrate site is built by Ser64, Asn116, Glu163, Asn170, Tyr194, Tyr246, and Val264.

This sequence belongs to the glutaminase family. Homotetramer.

The enzyme catalyses L-glutamine + H2O = L-glutamate + NH4(+). This Exiguobacterium sp. (strain ATCC BAA-1283 / AT1b) protein is Glutaminase.